Reading from the N-terminus, the 343-residue chain is 2-deoxy-scyllo-inosamine dehydrogenase (343 aa).

Positions 37, 59, 91, 94, 97, 105, and 146 each coordinate Zn(2+).

This sequence belongs to the zinc-containing alcohol dehydrogenase family. DOIA dehydrogenase subfamily. It depends on Zn(2+) as a cofactor.

The catalysed reaction is 2-deoxy-scyllo-inosamine + NADP(+) = 3-amino-2,3-dideoxy-scyllo-inosose + NADPH + H(+). The enzyme catalyses 2-deoxy-scyllo-inosamine + NAD(+) = 3-amino-2,3-dideoxy-scyllo-inosose + NADH + H(+). It functions in the pathway metabolic intermediate biosynthesis; 2-deoxystreptamine biosynthesis; 2-deoxystreptamine from D-glucose 6-phosphate: step 3/4. Its pathway is antibiotic biosynthesis; kanamycin biosynthesis. Catalyzes the oxidation of 2-deoxy-scyllo-inosamine (DOIA) with NAD(+) or NADP(+), forming 3-amino-2,3-dideoxy-scyllo-inosose (amino-DOI). The protein is 2-deoxy-scyllo-inosamine dehydrogenase (kanE) of Streptomyces kanamyceticus.